A 100-amino-acid chain; its full sequence is Urease subunit gamma (100 aa).

The protein belongs to the urease gamma subunit family. Heterotrimer of UreA (gamma), UreB (beta) and UreC (alpha) subunits. Three heterotrimers associate to form the active enzyme.

The protein resides in the cytoplasm. It catalyses the reaction urea + 2 H2O + H(+) = hydrogencarbonate + 2 NH4(+). Its pathway is nitrogen metabolism; urea degradation; CO(2) and NH(3) from urea (urease route): step 1/1. The protein is Urease subunit gamma of Arthrobacter sp. (strain FB24).